Here is a 209-residue protein sequence, read N- to C-terminus: Chaperone protein TorD (209 aa).

Belongs to the TorD/DmsD family. TorD subfamily.

The protein localises to the cytoplasm. Its function is as follows. Involved in the biogenesis of TorA. Acts on TorA before the insertion of the molybdenum cofactor and, as a result, probably favors a conformation of the apoenzyme that is competent for acquiring the cofactor. This Salmonella bongori (strain ATCC 43975 / DSM 13772 / NCTC 12419) protein is Chaperone protein TorD.